The primary structure comprises 205 residues: Holliday junction branch migration complex subunit RuvA (205 aa).

Positions 1–65 are domain I; the sequence is MIAKLKGILD…EDRIHLFGFL (65 aa). Residues 66-144 form a domain II region; that stretch reads DNTEKVAFNM…NINTIANNTS (79 aa). The flexible linker stretch occupies residues 145 to 153; sequence LATLSTDSN. Residues 154–205 form a domain III region; sequence THDNILSDAITALIALGISRAEATQILSDIYALSPSISVNELVRTALQRRAK.

This sequence belongs to the RuvA family. Homotetramer. Forms an RuvA(8)-RuvB(12)-Holliday junction (HJ) complex. HJ DNA is sandwiched between 2 RuvA tetramers; dsDNA enters through RuvA and exits via RuvB. An RuvB hexamer assembles on each DNA strand where it exits the tetramer. Each RuvB hexamer is contacted by two RuvA subunits (via domain III) on 2 adjacent RuvB subunits; this complex drives branch migration. In the full resolvosome a probable DNA-RuvA(4)-RuvB(12)-RuvC(2) complex forms which resolves the HJ.

It is found in the cytoplasm. In terms of biological role, the RuvA-RuvB-RuvC complex processes Holliday junction (HJ) DNA during genetic recombination and DNA repair, while the RuvA-RuvB complex plays an important role in the rescue of blocked DNA replication forks via replication fork reversal (RFR). RuvA specifically binds to HJ cruciform DNA, conferring on it an open structure. The RuvB hexamer acts as an ATP-dependent pump, pulling dsDNA into and through the RuvAB complex. HJ branch migration allows RuvC to scan DNA until it finds its consensus sequence, where it cleaves and resolves the cruciform DNA. The sequence is that of Holliday junction branch migration complex subunit RuvA from Orientia tsutsugamushi (strain Ikeda) (Rickettsia tsutsugamushi).